Here is a 219-residue protein sequence, read N- to C-terminus: tRNA (guanine-N(7)-)-methyltransferase (219 aa).

S-adenosyl-L-methionine is bound by residues Glu-46, Glu-71, Asp-100, and Asp-122. Residue Asp-122 is part of the active site. Residue Lys-126 participates in substrate binding. The interval 128-133 (KHEKRR) is interaction with RNA. Residues Asp-158 and 199–202 (TEYE) each bind substrate.

This sequence belongs to the class I-like SAM-binding methyltransferase superfamily. TrmB family.

The enzyme catalyses guanosine(46) in tRNA + S-adenosyl-L-methionine = N(7)-methylguanosine(46) in tRNA + S-adenosyl-L-homocysteine. It participates in tRNA modification; N(7)-methylguanine-tRNA biosynthesis. Functionally, catalyzes the formation of N(7)-methylguanine at position 46 (m7G46) in tRNA. This Oenococcus oeni (strain ATCC BAA-331 / PSU-1) protein is tRNA (guanine-N(7)-)-methyltransferase.